A 229-amino-acid polypeptide reads, in one-letter code: Heptaprenylglyceryl phosphate synthase (229 aa).

Sn-glycerol 1-phosphate is bound at residue K12. Positions 14 and 40 each coordinate Mg(2+). Sn-glycerol 1-phosphate is bound by residues 159–164 (YIEYSG), G189, and 209–210 (GN).

Belongs to the GGGP/HepGP synthase family. Group I subfamily. Homodimer. It depends on Mg(2+) as a cofactor.

It catalyses the reaction sn-glycerol 1-phosphate + all-trans-heptaprenyl diphosphate = 3-heptaprenyl-sn-glycero-1-phosphate + diphosphate. The protein operates within membrane lipid metabolism; glycerophospholipid metabolism. Prenyltransferase that catalyzes in vivo the transfer of the heptaprenyl moiety of heptaprenyl pyrophosphate (HepPP; 35 carbon atoms) to the C3 hydroxyl of sn-glycerol-1-phosphate (G1P), producing heptaprenylglyceryl phosphate (HepGP). This reaction is an ether-bond-formation step in the biosynthesis of archaea-type G1P-based membrane lipids found in Bacillales. This chain is Heptaprenylglyceryl phosphate synthase, found in Oceanobacillus iheyensis (strain DSM 14371 / CIP 107618 / JCM 11309 / KCTC 3954 / HTE831).